The chain runs to 387 residues: Glucose-1-phosphate adenylyltransferase (387 aa).

Alpha-D-glucose 1-phosphate is bound by residues tyrosine 99, glycine 164, 179-180 (EK), and serine 190.

Belongs to the bacterial/plant glucose-1-phosphate adenylyltransferase family. As to quaternary structure, homotetramer.

The catalysed reaction is alpha-D-glucose 1-phosphate + ATP + H(+) = ADP-alpha-D-glucose + diphosphate. Its pathway is glycan biosynthesis; glycogen biosynthesis. Functionally, involved in the biosynthesis of ADP-glucose, a building block required for the elongation reactions to produce glycogen. Catalyzes the reaction between ATP and alpha-D-glucose 1-phosphate (G1P) to produce pyrophosphate and ADP-Glc. This chain is Glucose-1-phosphate adenylyltransferase, found in Geobacillus stearothermophilus (Bacillus stearothermophilus).